The following is a 111-amino-acid chain: Shuttling pre-60S factor C23B6.02c (111 aa).

Composition is skewed to basic residues over residues M1–F12 and S59–K73. 2 disordered regions span residues M1–T25 and A47–E111. The segment covering Q83–E111 has biased composition (basic and acidic residues).

The protein belongs to the ECM1 family. Associates with the pre-60S ribosomal particle and the nucleopore complex.

The protein localises to the nucleus. Its subcellular location is the nucleolus. The protein resides in the cytoplasm. Its function is as follows. Pre-ribosomal factor involved in 60S ribosomal protein subunit export from the nucleus. This is Shuttling pre-60S factor C23B6.02c from Schizosaccharomyces pombe (strain 972 / ATCC 24843) (Fission yeast).